Here is a 202-residue protein sequence, read N- to C-terminus: Small ribosomal subunit protein uS2 (202 aa).

The protein belongs to the universal ribosomal protein uS2 family. Part of the 30S ribosomal subunit.

The polypeptide is Small ribosomal subunit protein uS2 (Pyrococcus furiosus (strain ATCC 43587 / DSM 3638 / JCM 8422 / Vc1)).